Reading from the N-terminus, the 433-residue chain is Energy-coupling factor transporter ATP-binding protein EcfA2 (433 aa).

The ABC transporter domain maps to 25–389; that stretch reads VRVKNLYAVY…QHIINSTSIQ (365 aa). 62-69 lines the ATP pocket; that stretch reads GNSGSGKS.

Belongs to the ABC transporter superfamily. Energy-coupling factor EcfA family. In terms of assembly, forms a stable energy-coupling factor (ECF) transporter complex composed of 2 membrane-embedded substrate-binding proteins (S component), 2 ATP-binding proteins (A component) and 2 transmembrane proteins (T component).

It localises to the cell membrane. Functionally, ATP-binding (A) component of a common energy-coupling factor (ECF) ABC-transporter complex. Unlike classic ABC transporters this ECF transporter provides the energy necessary to transport a number of different substrates. The chain is Energy-coupling factor transporter ATP-binding protein EcfA2 from Ureaplasma parvum serovar 3 (strain ATCC 700970).